A 149-amino-acid polypeptide reads, in one-letter code: Calmodulin (149 aa).

Residue Ala2 is modified to N-acetylalanine. 4 consecutive EF-hand domains span residues 8–43, 44–79, 81–116, and 117–149; these read EQIA…VGQN, PTEA…KMKD, DSEE…LGEK, and LTDE…MMSK. Asp21, Asp23, Asp25, Thr27, Glu32, Asp57, Asp59, Asn61, Thr63, Glu68, Asp94, Asp96, Asn98, Glu105, Asp130, Asp132, Asp134, Gln136, and Glu141 together coordinate Ca(2+).

It belongs to the calmodulin family.

Its function is as follows. Calmodulin mediates the control of a large number of enzymes, ion channels and other proteins by Ca(2+). Among the enzymes to be stimulated by the calmodulin-Ca(2+) complex are a number of protein kinases and phosphatases. This is Calmodulin (CMD1) from Achlya klebsiana.